A 198-amino-acid chain; its full sequence is MTSASNSPESYLSSKTRSSKLDDNYLKELNEDLKLRKQELLEILKPLEDKNNLLFQKLMSNLEEKQRSLQIMRQIMAGKGNDDSSVIELIKEAEEMKQNLERKNKMLRKEMEMLWNKTFNTEEFSDEEKVLQIKNKTDLQDGKAPKTPSSSRKTKNELETLCAEKGKEIRKRLFLPPGKETEENGMGQVSGTSQHHSE.

Positions 24–117 (NYLKELNEDL…RKEMEMLWNK (94 aa)) form a coiled coil. Basic and acidic residues-rich tracts occupy residues 135–144 (NKTDLQDGKA) and 154–167 (TKNE…EKGK). Residues 135 to 198 (NKTDLQDGKA…VSGTSQHHSE (64 aa)) form a disordered region. Residues 187–198 (GQVSGTSQHHSE) show a composition bias toward polar residues.

The sequence is that of Putative coiled-coil domain-containing protein 196 from Bos taurus (Bovine).